Reading from the N-terminus, the 130-residue chain is Small ribosomal subunit protein uS9 (130 aa).

The protein belongs to the universal ribosomal protein uS9 family.

The sequence is that of Small ribosomal subunit protein uS9 from Burkholderia vietnamiensis (strain G4 / LMG 22486) (Burkholderia cepacia (strain R1808)).